The chain runs to 415 residues: Na(+)-translocating NADH-quinone reductase subunit B (415 aa).

The next 4 helical transmembrane spans lie at 23–40 (WFAL…PGLV), 56–76 (IMIM…YNAG), 129–149 (FLPI…LFCM), and 164–184 (ILFA…LGIT). T236 is modified (FMN phosphoryl threonine). A run of 5 helical transmembrane segments spans residues 275-295 (VSTL…IASW), 297-317 (IIGG…VIGS), 325-345 (MPWH…FMAT), 358-378 (WAYG…NPAY), and 381-401 (GMML…HVVV).

The protein belongs to the NqrB/RnfD family. In terms of assembly, composed of six subunits; NqrA, NqrB, NqrC, NqrD, NqrE and NqrF. It depends on riboflavin as a cofactor. Requires FMN as cofactor.

It localises to the cell inner membrane. The enzyme catalyses a ubiquinone + n Na(+)(in) + NADH + H(+) = a ubiquinol + n Na(+)(out) + NAD(+). In terms of biological role, NQR complex catalyzes the reduction of ubiquinone-1 to ubiquinol by two successive reactions, coupled with the transport of Na(+) ions from the cytoplasm to the periplasm. NqrA to NqrE are probably involved in the second step, the conversion of ubisemiquinone to ubiquinol. This Vibrio cholerae serotype O1 (strain ATCC 39541 / Classical Ogawa 395 / O395) protein is Na(+)-translocating NADH-quinone reductase subunit B.